The chain runs to 283 residues: Protein boule-like (283 aa).

Positions Met1 to Pro25 are disordered. An RRM domain is found at Asn33–Arg110. The DAZ domain occupies Pro160 to Gln184.

Belongs to the RRM DAZ family. As to quaternary structure, interacts with DAZ1 and DAZL. In terms of tissue distribution, testis specific. Not expressed in early embryos, primordial germ cells and spermatogonial cells. First expressed in the cytoplasm of spermatocytes and then persists through meiosis.

Its subcellular location is the cytoplasm. In terms of biological role, probable RNA-binding protein, which may be required during spermatogenesis. May act by binding to the 3'-UTR of mRNAs and regulating their translation. The protein is Protein boule-like (BOLL) of Homo sapiens (Human).